Here is a 114-residue protein sequence, read N- to C-terminus: MIFYLHITIFLVVCLLMMLFFSLGFQGKKAKEKNSPFECGFDPFSLSRVPFSLKFFFVGIVFLIFDVEIVVILPFPLVMMTKNLMFVFSFTFINFLIVLGLLYEFKYSMLDRLK.

Transmembrane regions (helical) follow at residues 1-21, 55-75, and 85-105; these read MIFY…MLFF, FFFV…ILPF, and MFVF…LYEF.

The protein belongs to the complex I subunit 3 family.

It localises to the mitochondrion membrane. The enzyme catalyses a ubiquinone + NADH + 5 H(+)(in) = a ubiquinol + NAD(+) + 4 H(+)(out). Core subunit of the mitochondrial membrane respiratory chain NADH dehydrogenase (Complex I) that is believed to belong to the minimal assembly required for catalysis. Complex I functions in the transfer of electrons from NADH to the respiratory chain. The immediate electron acceptor for the enzyme is believed to be ubiquinone. The sequence is that of NADH-ubiquinone oxidoreductase chain 3 (ND3) from Rhipicephalus sanguineus (Brown dog tick).